Consider the following 366-residue polypeptide: ATP-dependent 6-phosphofructokinase (366 aa).

Residues glycine 16, 78–79, and 118–121 each bind ATP; these read RE and GNGT. Residues 74–94 form a disordered region; the sequence is LGTSREKPFKPDPGEKDSEAG. The span at 77–94 shows a compositional bias: basic and acidic residues; sequence SREKPFKPDPGEKDSEAG. A Mg(2+)-binding site is contributed by asparagine 119. Substrate-binding positions include 141 to 143, arginine 178, 185 to 187, glutamate 238, arginine 282, and 288 to 291; these read TID, MGH, and YLQR. Aspartate 143 (proton acceptor) is an active-site residue.

This sequence belongs to the phosphofructokinase type A (PFKA) family. Mixed-substrate PFK group III subfamily. As to quaternary structure, homodimer or homotetramer. It depends on Mg(2+) as a cofactor.

It is found in the cytoplasm. It catalyses the reaction beta-D-fructose 6-phosphate + ATP = beta-D-fructose 1,6-bisphosphate + ADP + H(+). Its pathway is carbohydrate degradation; glycolysis; D-glyceraldehyde 3-phosphate and glycerone phosphate from D-glucose: step 3/4. Catalyzes the phosphorylation of D-fructose 6-phosphate to fructose 1,6-bisphosphate by ATP, the first committing step of glycolysis. The sequence is that of ATP-dependent 6-phosphofructokinase from Spirochaeta thermophila (strain ATCC 49972 / DSM 6192 / RI 19.B1).